The chain runs to 76 residues: Large ribosomal subunit protein eL20 (76 aa).

The protein belongs to the eukaryotic ribosomal protein eL20 family. Part of the 50S ribosomal subunit. Binds 23S rRNA.

The protein is Large ribosomal subunit protein eL20 of Methanococcus maripaludis (strain C5 / ATCC BAA-1333).